The primary structure comprises 70 residues: MFTLKKSMLLLFFLGTINLSLCEEERNAEEERRDEPDEMDVEVEKRFLPVIAGVAAKFLPKIFCAITKKC.

Residues 1-22 (MFTLKKSMLLLFFLGTINLSLC) form the signal peptide. Positions 23–44 (EEERNAEEERRDEPDEMDVEVE) are excised as a propeptide. A disulfide bond links C64 and C70.

Expressed by the skin glands.

The protein localises to the secreted. Its function is as follows. Antimicrobial activity against the Gram-negative bacterium E.coli, the Gram-positive bacterium S.aureus and the yeast C.albicans. The sequence is that of Brevinin-1PLc from Lithobates palustris (Pickerel frog).